We begin with the raw amino-acid sequence, 811 residues long: Potassium transporter 7 (811 aa).

Residues 1–52 lie on the Cytoplasmic side of the membrane; it reads MPSYQYLLSLLFYILDCTDRFSVIVTIHNHRVGVLMIVLLQDQWKSYCRTIS. A helical transmembrane segment spans residues 53-73; it reads LLAFQSFGVVYGDLSTSPLYV. Topologically, residues 74-93 are extracellular; that stretch reads YKSAFSGRLNNYRDETTIFG. The chain crosses the membrane as a helical span at residues 94–114; sequence LFSLIFWTLTLLPLLKYVIIV. Residues 115-181 lie on the Cytoplasmic side of the membrane; it reads LNADDNGEGG…EKHRKLRTCL (67 aa). The helical transmembrane segment at 182–202 threads the bilayer; that stretch reads LLFVLFGACMVIGDGVFTPAI. Topologically, residues 203-217 are extracellular; that stretch reads SVLSAISGLKDPGPG. The helical transmembrane segment at 218 to 238 threads the bilayer; the sequence is GIPDGWVVFIACIVLVGLFAL. Residues 239–245 lie on the Cytoplasmic side of the membrane; the sequence is QHRGTHR. A helical membrane pass occupies residues 246-266; sequence VAFMFAPIVVVWLLSIGVIGL. Residues 267 to 296 are Extracellular-facing; that stretch reads YNIIHWNHRIFLALSPHYVIKFFKMTGKDG. Residues 297–317 form a helical membrane-spanning segment; the sequence is WLSLGGVLLAITGTEAMFADL. At 318–326 the chain is on the cytoplasmic side; the sequence is GHFTAASIR. A helical transmembrane segment spans residues 327 to 347; sequence LAFVGAIYPCLVLQYMGQAAF. At 348–366 the chain is on the extracellular side; the sequence is LSRNMSAVEDSFYQSVPRS. Asn-351 carries an N-linked (GlcNAc...) asparagine glycan. A helical membrane pass occupies residues 367-387; that stretch reads LFWPVFVIATLAAVVGSQSII. The Cytoplasmic portion of the chain corresponds to 388-418; sequence SATFSIVKQCLSLGCFPRVKVVHTSRWIHGQ. A helical transmembrane segment spans residues 419-439; it reads IYIPEINWILMVLCLAVTLGF. The Extracellular segment spans residues 440–450; that stretch reads RDTTVIGNAYG. The helical transmembrane segment at 451 to 471 threads the bilayer; that stretch reads LACIVVMFVTTWLMALVIIFV. The Cytoplasmic portion of the chain corresponds to 472–475; sequence WQKN. The helical transmembrane segment at 476 to 496 threads the bilayer; it reads ILLALLFVVAFGSIEVVYLSA. The Extracellular segment spans residues 497–503; it reads AVTKVPQ. Residues 504-524 traverse the membrane as a helical segment; the sequence is GGWAPIVFAFVFMLVMYVWHY. Topologically, residues 525–811 are cytoplasmic; the sequence is GSRRKYLFDL…LVEVGMIYYV (287 aa). The tract at residues 680-702 is disordered; that stretch reads TGLVMRDSNNEASGTSLTRSSRS.

This sequence belongs to the HAK/KUP transporter (TC 2.A.72.3) family. In terms of tissue distribution, expressed in roots and shoots.

It localises to the membrane. In terms of biological role, high-affinity potassium transporter. This is Potassium transporter 7 (HAK7) from Oryza sativa subsp. japonica (Rice).